A 419-amino-acid polypeptide reads, in one-letter code: UPF0329 protein ECU07_1890/ECU10_0010 (419 aa).

Over residues 136–165 the composition is skewed to basic and acidic residues; that stretch reads RQRKREEETERSVKELVGDEEKAKSKEEKA. The interval 136 to 222 is disordered; that stretch reads RQRKREEETE…KGGKKKSKGG (87 aa). Over residues 213–222 the composition is skewed to basic residues; the sequence is KGGKKKSKGG.

It belongs to the UPF0329 family.

This Encephalitozoon cuniculi (strain GB-M1) (Microsporidian parasite) protein is UPF0329 protein ECU07_1890/ECU10_0010.